The following is a 145-amino-acid chain: Glutaconyl-CoA decarboxylase subunit gamma (145 aa).

Residues Ala52–Ala82 are disordered. A compositionally biased stretch (low complexity) spans Ala57–Ala75. One can recognise a Biotinyl-binding domain in the interval Ser77–Leu145. Lys112 carries the post-translational modification N6-biotinyllysine.

As to quaternary structure, heterooctamer consisting of two alpha, two beta, two gamma and two delta subunits. The cofactor is biotin.

The catalysed reaction is (2E)-glutaconyl-CoA + Na(+)(in) + H(+) = (2E)-butenoyl-CoA + Na(+)(out) + CO2. It functions in the pathway amino-acid degradation; L-glutamate degradation via hydroxyglutarate pathway; crotonoyl-CoA from L-glutamate: step 5/5. In terms of biological role, biotin carrier subunit of the primary sodium pump glutaconyl-CoA decarboxylase (GCD). The protein is Glutaconyl-CoA decarboxylase subunit gamma (gcdC) of Acidaminococcus fermentans (strain ATCC 25085 / DSM 20731 / CCUG 9996 / CIP 106432 / VR4).